Consider the following 353-residue polypeptide: Lactosylceramide 4-alpha-galactosyltransferase (353 aa).

Residues 1–22 (MSKPPDLLLRLLRGAPRQRVCT) lie on the Cytoplasmic side of the membrane. The helical; Signal-anchor for type II membrane protein transmembrane segment at 23-43 (LFIIGFKFTFFVSIMIYWHVV) threads the bilayer. The Lumenal segment spans residues 44–353 (GEPKEKGQLY…TTHEAMKMYL (310 aa)). A glycan (N-linked (GlcNAc...) asparagine) is linked at Asn-121. The DXD motif signature appears at 192–194 (DTD). Asn-203 carries an N-linked (GlcNAc...) asparagine glycan.

This sequence belongs to the glycosyltransferase 32 family.

The protein resides in the golgi apparatus membrane. The catalysed reaction is a beta-D-Gal-(1-&gt;4)-beta-D-Glc-(1&lt;-&gt;1)-Cer(d18:1(4E)) + UDP-alpha-D-galactose = a globoside Gb3Cer (d18:1(4E)) + UDP + H(+). It carries out the reaction a beta-D-Gal-(1&lt;-&gt;1')-ceramide + UDP-alpha-D-galactose = alpha-D-Gal-(1-&gt;4)-beta-D-Gal-(1&lt;-&gt;1')-Cer + UDP + H(+). It participates in glycolipid biosynthesis. In terms of biological role, catalyzes the transfer of galactose from UDP-alpha-D-galactose to lactosylceramide/beta-D-galactosyl-(1-&gt;4)-beta-D-glucosyl-(1&lt;-&gt;1)-ceramide(d18:1(4E)) to produce globotriaosylceramide/globoside Gb3Cer (d18:1(4E)). Also able to transfer galactose to galactosylceramide/beta-D-Gal-(1&lt;-&gt;1')-Cer. Globoside Gb3Cer is a glycosphingolipid of the globo serie, one of the major types of neutral root structures of glycosphingolipids, that constitute a significant portion of mammalian cell membranes. The polypeptide is Lactosylceramide 4-alpha-galactosyltransferase (A4GALT) (Pan troglodytes (Chimpanzee)).